The chain runs to 499 residues: Protein-tyrosine sulfotransferase (499 aa).

Residues 1–9 are Cytoplasmic-facing; the sequence is MRLPYRNKK. Residues 10–30 form a helical; Signal-anchor for type II membrane protein membrane-spanning segment; it reads VTLWVLFGIIVITMFLFKFTE. At 31–499 the chain is on the lumenal side; the sequence is LRPTCLFKVD…NIMEDPMADT (469 aa). 80 to 84 is a 3'-phosphoadenylyl sulfate binding site; that stretch reads RSGTT. An intrachain disulfide couples Cys-98 to Cys-158. Catalysis depends on Glu-101, which acts as the Proton donor/acceptor. The tract at residues 103-107 is interaction with peptide substrate; the sequence is RVIPR. Residues Arg-185, Ser-193, and Arg-197 each coordinate 3'-phosphoadenylyl sulfate. A disulfide bond links Cys-227 and Cys-235. 3'-phosphoadenylyl sulfate contacts are provided by residues Tyr-240, 287-296, and Lys-302; that span reads SSDQVIKPVN. Asn-346 and Asn-380 each carry an N-linked (GlcNAc...) asparagine glycan. Disordered regions lie at residues 362 to 460 and 476 to 499; these read KQVL…QKPK and NNIN…MADT. Low complexity-rich tracts occupy residues 375–400 and 408–434; these read TNTI…IIPE and HVQQ…QQQQ. Residues 443–460 are compositionally biased toward basic and acidic residues; the sequence is EREAEPDREQQLLHQKPK. Over residues 476–491 the composition is skewed to low complexity; that stretch reads NNINNNINNNNNNNNI.

The protein belongs to the protein sulfotransferase family.

It is found in the golgi apparatus membrane. It catalyses the reaction L-tyrosyl-[protein] + 3'-phosphoadenylyl sulfate = O-sulfo-L-tyrosine-[protein] + adenosine 3',5'-bisphosphate + H(+). Catalyzes the O-sulfation of tyrosine residues within acidic motifs of polypeptides. Has a role in protein secretion. This is Protein-tyrosine sulfotransferase from Drosophila melanogaster (Fruit fly).